Consider the following 557-residue polypeptide: Carbamoyl phosphate synthase large chain, N-terminal section (557 aa).

The carboxyphosphate synthetic domain stretch occupies residues 1 to 402 (MPKRTDIKKI…ALLKAVRSLE (402 aa)). 12 residues coordinate ATP: Arg129, Arg169, Gly175, Gly176, Lys208, Leu210, Glu215, Gly241, Val242, His243, Gln285, and Glu299. The ATP-grasp domain occupies 133–328 (KETMESIGLK…IAKVAAKLAV (196 aa)). Gln285, Glu299, and Asn301 together coordinate Mg(2+). Mn(2+) contacts are provided by Gln285, Glu299, and Asn301. The segment at 403 to 553 (LDRYGLAFPK…PYYTVDGQEI (151 aa)) is oligomerization domain.

Belongs to the CarB family. In terms of assembly, composed of two chains; the small (or glutamine) chain promotes the hydrolysis of glutamine to ammonia, which is used by the large (or ammonia) chain to synthesize carbamoyl phosphate. Tetramer of heterodimers (alpha,beta)4. Mg(2+) serves as cofactor. Mn(2+) is required as a cofactor.

It carries out the reaction hydrogencarbonate + L-glutamine + 2 ATP + H2O = carbamoyl phosphate + L-glutamate + 2 ADP + phosphate + 2 H(+). The catalysed reaction is hydrogencarbonate + NH4(+) + 2 ATP = carbamoyl phosphate + 2 ADP + phosphate + 2 H(+). It functions in the pathway amino-acid biosynthesis; L-arginine biosynthesis; carbamoyl phosphate from bicarbonate: step 1/1. Its pathway is pyrimidine metabolism; UMP biosynthesis via de novo pathway; (S)-dihydroorotate from bicarbonate: step 1/3. Large subunit of the glutamine-dependent carbamoyl phosphate synthetase (CPSase). CPSase catalyzes the formation of carbamoyl phosphate from the ammonia moiety of glutamine, carbonate, and phosphate donated by ATP, constituting the first step of 2 biosynthetic pathways, one leading to arginine and/or urea and the other to pyrimidine nucleotides. The large subunit (synthetase) binds the substrates ammonia (free or transferred from glutamine from the small subunit), hydrogencarbonate and ATP and carries out an ATP-coupled ligase reaction, activating hydrogencarbonate by forming carboxy phosphate which reacts with ammonia to form carbamoyl phosphate. In Aquifex aeolicus (strain VF5), this protein is Carbamoyl phosphate synthase large chain, N-terminal section (carB1).